The chain runs to 307 residues: Tropinone reductase homolog At2g29340 (307 aa).

NADP(+) is bound at residue 13–37; it reads LVTGGASGIGYAIVEELAGFGARIH. Position 146 (Ser-146) interacts with substrate. Tyr-159 functions as the Proton acceptor in the catalytic mechanism.

It belongs to the short-chain dehydrogenases/reductases (SDR) family. SDR65C subfamily.

The protein is Tropinone reductase homolog At2g29340 of Arabidopsis thaliana (Mouse-ear cress).